The sequence spans 37 residues: Large ribosomal subunit protein bL36 (37 aa).

The protein belongs to the bacterial ribosomal protein bL36 family.

The polypeptide is Large ribosomal subunit protein bL36 (Parasynechococcus marenigrum (strain WH8102)).